The following is a 256-amino-acid chain: Nuclear shuttle protein (256 aa).

The tract at residues 1 to 53 (MYPSRNKRGSYFNQRRQYSRNHVWKRPTAAKRHDWKRRPSNTSKPNDEPKMSA) is disordered. Residues 17-39 (QYSRNHVWKRPTAAKRHDWKRRP) are compositionally biased toward basic residues. Residues 21–42 (NHVWKRPTAAKRHDWKRRPSNT) carry the Bipartite nuclear localization signal motif. The Nuclear localization signal signature appears at 81-96 (DLGRSEPNRSRSYIRL). The segment at 150–187 (ELFGARIHSHGNLSVTPALKDRYYIRHVCKRVLSVEKD) is interaction with Arabidopsis thaliana NSI protein.

It belongs to the begomovirus nuclear shuttle protein family. In terms of assembly, binds to single-stranded and double-stranded viral DNA. Interacts with the host nuclear shuttle interacting (NSI) protein. This interaction may allow NSP to recruit NSI monomers to the viral genome and thus regulate nuclear export of viral genome by NSP.

It localises to the host nucleus. The protein resides in the host cytoplasm. Its subcellular location is the host cell membrane. Its function is as follows. Binds to the genomic viral ssDNA, shuttles it into and out of the cell nucleus. Begomoviruses use 2 proteins to transport their DNA from cell to cell. The nuclear shuttle protein (NSP) shuttles it between nucleus and cytoplasm and the movement protein (MP) probably transports the DNA-NSP complex to the cell periphery and facilitates movement across the cell wall. This Abutilon mosaic virus (isolate West India) (AbMV) protein is Nuclear shuttle protein.